The following is a 382-amino-acid chain: Sphingoid long-chain base transporter RSB1 (382 aa).

Over 1–34 the chain is Extracellular; the sequence is MSNATNNTLGSLLPQLEAAANSNSLYGGMVPNLR. N-linked (GlcNAc...) asparagine glycans are attached at residues Asn-3 and Asn-6. Residues 35 to 55 traverse the membrane as a helical segment; it reads FNITMIVIWGILLTIHVVQLL. Residues 56–57 are Cytoplasmic-facing; that stretch reads MR. Residues 58–78 form a helical membrane-spanning segment; sequence QYWFSIAFICTGILEVLGFIG. At 79-90 the chain is on the extracellular side; it reads RTWSHSNVADMD. A helical transmembrane segment spans residues 91 to 111; the sequence is AFLLNMICLTIAPVFTMGGIY. Residues 112–135 lie on the Cytoplasmic side of the membrane; the sequence is YQLAKLIEVYGHRFSLLPSPMAYS. Residues 136 to 156 traverse the membrane as a helical segment; the sequence is FIFICSDIVSLVVQAVGGGLC. Over 157–171 the chain is Extracellular; it reads GVAVTDGTSTTTGNH. A helical membrane pass occupies residues 172 to 192; sequence VFIAGLAIQVASMAIFLMLWF. Residues 193–241 are Cytoplasmic-facing; it reads HFLFRIYISVRWEHINSRPISLSLLKISQTEVDYLYREKFHFLRLEPKR. A helical membrane pass occupies residues 242–262; that stretch reads WVFHYFNLAMTVAVLTIFTRC. The Extracellular portion of the chain corresponds to 263-281; that stretch reads CYRLAELVVGWDGYLITHE. A helical transmembrane segment spans residues 282 to 302; the sequence is WYFIILDALMMAIATVTLTIF. Over 303-382 the chain is Cytoplasmic; that stretch reads HPGFAFKGRS…LFSSKKKAKL (80 aa).

It belongs to the lipid-translocating exporter (LTE) (TC 9.A.26.1) family.

It localises to the cell membrane. Its function is as follows. Catalyzes the ATP-dependent translocation of sphingoid long-chain bases (LCBs) from the cytoplasmic site toward the extracytoplasmic side of the membrane (flip-flop). Involved in the establishment of the functional lipid asymmetry of the plasma membrane. Regulates intracellular levels of LCBs, sphingolipid precursors that are growth inhibitory at increased levels. This Saccharomyces cerevisiae (strain AWRI1631) (Baker's yeast) protein is Sphingoid long-chain base transporter RSB1 (RSB1).